A 216-amino-acid polypeptide reads, in one-letter code: Homeobox-leucine zipper protein ATHB-40 (216 aa).

A disordered region spans residues 28-52 (GEVKQPKRRRKKTKGSVASADGGNG). Positions 52-111 (GLFRKRKLTDEQVNMLEMSFGDEHKLESERKDRLAAELGLDPRQVAVWFQNRRARWKNKR) form a DNA-binding region, homeobox. Positions 112–140 (LEEEYNKLKNSHDNVVVDKCRLESEVIQL) are leucine-zipper.

This sequence belongs to the HD-ZIP homeobox family. Class I subfamily. In terms of tissue distribution, expressed in roots, flowers and siliques.

It localises to the nucleus. Probable transcription factor. This is Homeobox-leucine zipper protein ATHB-40 (ATHB-40) from Arabidopsis thaliana (Mouse-ear cress).